The following is a 339-amino-acid chain: Small ribosomal subunit biogenesis GTPase RsgA (339 aa).

Residues 111-271 enclose the CP-type G domain; the sequence is MRGLLKPVAA…LIDSPGIREF (161 aa). GTP is bound by residues 159–162 and 213–221; these read NKAD and GQSGVGKSS. Residues cysteine 295, cysteine 300, histidine 302, and cysteine 308 each coordinate Zn(2+).

The protein belongs to the TRAFAC class YlqF/YawG GTPase family. RsgA subfamily. As to quaternary structure, monomer. Associates with 30S ribosomal subunit, binds 16S rRNA. It depends on Zn(2+) as a cofactor.

It localises to the cytoplasm. In terms of biological role, one of several proteins that assist in the late maturation steps of the functional core of the 30S ribosomal subunit. Helps release RbfA from mature subunits. May play a role in the assembly of ribosomal proteins into the subunit. Circularly permuted GTPase that catalyzes slow GTP hydrolysis, GTPase activity is stimulated by the 30S ribosomal subunit. In Pseudomonas aeruginosa (strain LESB58), this protein is Small ribosomal subunit biogenesis GTPase RsgA.